The primary structure comprises 959 residues: MSDKTNDDKTLSVNPKKTLTLKRPGVEQSTVRQNFSHGRTKAVVVETKKRKFSRPDEKPEVEAAAAPKPAAPAAAPQQAPASAPVSASAAQASAPQPAPVKAPATKAPAAPSAPVTKPHVAQQRPVHQRPGGQQAQRPRPADRSGMVLNTLSRSEMDARRRALEEAQIREVEERARAVEEAKRRAEEDARRAKEREESARRQAEEEARLKAEAEARRKAEEEAAKRMPQPEARSERRDDARPAPYGARPQQAGRPQGGRPQPAGRPQQGSPRPAPIIADAAPIAGKPLPQSQLRKPGQSDDDDDRRSGAARRGVAAKPEVRAPKVVKGEDDRRRGKLTLTSNLEEEGRSRSLSAMRRRQEKFKRSQMQETREKISREVTIPETITLQELAQRMAERSVDIIKYLMKQGQMMKPGDVIDADTAQLIAEEFGHTVKRVAESDVEEGIFDVADNESAMVSRPPVVTIMGHVDHGKTSLLDAIRHANVVSGEAGGITQHIGAYQVVQNGQKITFIDTPGHAAFTAMRARGAQATDIAILVVAADDSVMPQTIESINHAKAAGVPIIVAINKIDKPAADPQKVCTALLQHEVFVESMGGEVLDVEVSAKNKINLDKLLDAVLLQAEMLDLKADPDRTAEGVVIEAQLDRGRGSVATVLIQKGTLHPGDILVAGSEWGRVRALVNDRGEHVKEAGPAMPVEILGLQGTPQAGDRFAVVANEAKAREIAEYRQRLARDKAVARQSGARGSLEQMMNQLQVSGTKEFPLVIKGDVQGSIEAIINALDKLGTDEVRARIVHSGAGGITESDVSLAEASNAAIIGFNVRANKQARDSAEQQGIEIRYYNIIYDLIDDVKAAMSGLLSPERRETFLGNAEILEVFNITKVGKVAGCRVTEGKVERGAGVRLIRDNVVIHEGKLKTLKRFKDEVAEVPSGQECGMAFENYDDIRAGDVIEAFRVEHVSRTL.

Positions 1 to 10 (MSDKTNDDKT) are enriched in basic and acidic residues. Residues 1–374 (MSDKTNDDKT…SQMQETREKI (374 aa)) are disordered. The span at 27-37 (EQSTVRQNFSH) shows a compositional bias: polar residues. 2 stretches are compositionally biased toward low complexity: residues 63 to 118 (AAAA…VTKP) and 128 to 138 (QRPGGQQAQRP). 2 stretches are compositionally biased toward basic and acidic residues: residues 154-225 (SEMD…EAAK) and 232-241 (ARSERRDDAR). Residues 246–284 (GARPQQAGRPQGGRPQPAGRPQQGSPRPAPIIADAAPIA) are compositionally biased toward low complexity. Basic and acidic residues predominate over residues 318-333 (PEVRAPKVVKGEDDRR). The region spanning 457 to 626 (SRPPVVTIMG…LLQAEMLDLK (170 aa)) is the tr-type G domain. The tract at residues 466 to 473 (GHVDHGKT) is G1. 466-473 (GHVDHGKT) contributes to the GTP binding site. The interval 491 to 495 (GITQH) is G2. Residues 512–515 (DTPG) are G3. Residues 512–516 (DTPGH) and 566–569 (NKID) contribute to the GTP site. Residues 566-569 (NKID) are G4. The interval 602–604 (SAK) is G5.

The protein belongs to the TRAFAC class translation factor GTPase superfamily. Classic translation factor GTPase family. IF-2 subfamily.

It is found in the cytoplasm. Its function is as follows. One of the essential components for the initiation of protein synthesis. Protects formylmethionyl-tRNA from spontaneous hydrolysis and promotes its binding to the 30S ribosomal subunits. Also involved in the hydrolysis of GTP during the formation of the 70S ribosomal complex. This Brucella ovis (strain ATCC 25840 / 63/290 / NCTC 10512) protein is Translation initiation factor IF-2.